Here is a 58-residue protein sequence, read N- to C-terminus: Large ribosomal subunit protein bL32 (58 aa).

Belongs to the bacterial ribosomal protein bL32 family.

This chain is Large ribosomal subunit protein bL32, found in Staphylococcus aureus (strain NCTC 8325 / PS 47).